Here is a 422-residue protein sequence, read N- to C-terminus: Probable tRNA pseudouridine synthase D (422 aa).

Catalysis depends on Asp83, which acts as the Nucleophile. The region spanning Gly164–Lys386 is the TRUD domain.

The protein belongs to the pseudouridine synthase TruD family.

It carries out the reaction uridine(13) in tRNA = pseudouridine(13) in tRNA. Could be responsible for synthesis of pseudouridine from uracil-13 in transfer RNAs. The protein is Probable tRNA pseudouridine synthase D of Thermococcus sibiricus (strain DSM 12597 / MM 739).